The following is an 887-amino-acid chain: MFKQLSQFGKNITDELAKGINEDTASEGQHGAGAQGGRREEGGSPYEELPKEIQAKLRKFEKYEQKYPLLLNAYKAEKEKSDEVELLLKVLSENTPVSAIGDVETLRGFFEDVGVKTAMLTEEIKRITGENNGLQKQLAEAQESLEQRQRDLTSREEELAKSSREATELRELRQQAVAEKDAAVTERDDAQKAAAEMETRCTEAEAHAAEMKSQIESMETELKRTEKLLTTYKSTIQELGASQATGEAQPSSEAPSVRGKKGKGKRGKGKKRVQAADEKADTSSELELGEEKTPSTSSAGDEIIEAIETKQKYENLVEEHQQLSLELEKSRHWEQECLDSRKKVETLETELKDVKAKLKNSNEELETVRGMLKTVGNELVHARDELKQLNCEGTNEVERLKSELQELRTENSTQIATLKEQLQLLNDQKKALETDVEQHKRKMEDLESELLKSQENVSKFRNQNNDLSEKLRDYIVLKKSEATTRMSLSQKEKTIEYLEEQVRQYNSKEIEDKKAFADSKTELERWQRTAANLEKQLERIRLETKRHDDNLESYIKENGKLSERLEVLQEKYDSLQNLKSNSGDQVSAIRKQCEELNSKLKEATKRVMSLEDELNETSTVLQERTREATTMRRMINSDRSSKDTKIRELEDRVAAASEERDKLKSELDVLLARKNHETQDLKNTNQELVVKINALELKEQELATEVQQLKVLNQTIRRHSSTAADGSEELELTVRKLKDSLRTSEKKMRELKDSNEELKSLNDELNAKLDRLANRYKVLSTQLKMSKDMSSQSRHSSRSGSLVSPSSDNETGNSPRKISISSAHPAPVVASYDNSAEMESNEKLAYIRNVLLGFLEHREQRSQLLPVVSTLLQLSSHDEKRLLTSLK.

Disordered stretches follow at residues 16–50, 142–214, 240–301, and 783–822; these read LAKG…EELP, QESL…MKSQ, GASQ…SAGD, and LKMS…SISS. 2 stretches are compositionally biased toward basic and acidic residues: residues 37–50 and 145–210; these read GRRE…EELP and LEQR…HAAE. Positions 118-241 form a coiled coil; the sequence is AMLTEEIKRI…YKSTIQELGA (124 aa). The span at 240-254 shows a compositional bias: polar residues; the sequence is GASQATGEAQPSSEA. The segment covering 258–273 has biased composition (basic residues); it reads RGKKGKGKRGKGKKRV. The stretch at 299–788 forms a coiled coil; sequence AGDEIIEAIE…LSTQLKMSKD (490 aa). The segment covering 788–807 has biased composition (low complexity); the sequence is DMSSQSRHSSRSGSLVSPSS. The span at 808–822 shows a compositional bias: polar residues; the sequence is DNETGNSPRKISISS. Residues 837 to 885 enclose the GRIP domain; it reads EMESNEKLAYIRNVLLGFLEHREQRSQLLPVVSTLLQLSSHDEKRLLTS.

The protein resides in the cytoplasm. Its subcellular location is the golgi apparatus membrane. Functionally, involved in vesicular transport between an endosomal compartment and the Golgi apparatus. This chain is Golgin IMH1 (IMH1), found in Eremothecium gossypii (strain ATCC 10895 / CBS 109.51 / FGSC 9923 / NRRL Y-1056) (Yeast).